The chain runs to 142 residues: Nucleoside diphosphate kinase (142 aa).

The ATP site is built by Lys11, Phe59, Arg87, Thr93, Arg104, and Asn114. His117 functions as the Pros-phosphohistidine intermediate in the catalytic mechanism.

The protein belongs to the NDK family. Homotetramer. The cofactor is Mg(2+).

Its subcellular location is the cytoplasm. It carries out the reaction a 2'-deoxyribonucleoside 5'-diphosphate + ATP = a 2'-deoxyribonucleoside 5'-triphosphate + ADP. It catalyses the reaction a ribonucleoside 5'-diphosphate + ATP = a ribonucleoside 5'-triphosphate + ADP. Functionally, major role in the synthesis of nucleoside triphosphates other than ATP. The ATP gamma phosphate is transferred to the NDP beta phosphate via a ping-pong mechanism, using a phosphorylated active-site intermediate. In Salinibacter ruber (strain DSM 13855 / M31), this protein is Nucleoside diphosphate kinase.